The sequence spans 309 residues: MAHINCTQATEFILVGLTDHQELKMPLFVLFLSIYLFTVVGNLGLILLIRADTSLNTPMYFFLSNLAFVDFCYSSVITPKMLGNFLYKQNVISFDACATQLGCFLTFMISESLLLASMAYDRYVAICNPLLYMVVMTPGICIQLVAVPYSYSFLMALFHTILTFRLSYCHSNIVNHFYCDDMPLLRLTCSDTRFKQLWIFACAGIMFISSLLIVFVSYMFIISAILRMHSAEGRQKAFSTCGSHMLAVTIFYGTLIFMYLQPSSSHALDTDKMASVFYTVIIPMLNPLIYSLQNKEVKEALKKIIINKN.

Residues 1-25 (MAHINCTQATEFILVGLTDHQELKM) lie on the Extracellular side of the membrane. Asn-5 carries N-linked (GlcNAc...) asparagine glycosylation. The helical transmembrane segment at 26-46 (PLFVLFLSIYLFTVVGNLGLI) threads the bilayer. Residues 47–54 (LLIRADTS) are Cytoplasmic-facing. Residues 55-75 (LNTPMYFFLSNLAFVDFCYSS) form a helical membrane-spanning segment. Topologically, residues 76 to 99 (VITPKMLGNFLYKQNVISFDACAT) are extracellular. Cys-97 and Cys-189 are oxidised to a cystine. A helical transmembrane segment spans residues 100–120 (QLGCFLTFMISESLLLASMAY). Residues 121 to 139 (DRYVAICNPLLYMVVMTPG) are Cytoplasmic-facing. Residues 140–160 (ICIQLVAVPYSYSFLMALFHT) form a helical membrane-spanning segment. Residues 161–197 (ILTFRLSYCHSNIVNHFYCDDMPLLRLTCSDTRFKQL) are Extracellular-facing. Residues 198-217 (WIFACAGIMFISSLLIVFVS) form a helical membrane-spanning segment. Residues 218–237 (YMFIISAILRMHSAEGRQKA) are Cytoplasmic-facing. The chain crosses the membrane as a helical span at residues 238–258 (FSTCGSHMLAVTIFYGTLIFM). The Extracellular portion of the chain corresponds to 259–271 (YLQPSSSHALDTD). Residues 272-292 (KMASVFYTVIIPMLNPLIYSL) form a helical membrane-spanning segment. Topologically, residues 293–309 (QNKEVKEALKKIIINKN) are cytoplasmic.

Belongs to the G-protein coupled receptor 1 family.

Its subcellular location is the cell membrane. In terms of biological role, odorant receptor. In Homo sapiens (Human), this protein is Olfactory receptor 8U1 (OR8U1).